Here is a 255-residue protein sequence, read N- to C-terminus: Putative F-box protein L126 (255 aa).

One can recognise an F-box domain in the interval 1-46 (MLPEEILFMVFSFLDVKELIACSHACSHACSQWRRICSDKLLWVQK).

The protein is Putative F-box protein L126 of Acanthamoeba polyphaga (Amoeba).